Reading from the N-terminus, the 308-residue chain is Methionyl-tRNA formyltransferase (308 aa).

110–113 (SLLP) lines the (6S)-5,6,7,8-tetrahydrofolate pocket.

This sequence belongs to the Fmt family.

It catalyses the reaction L-methionyl-tRNA(fMet) + (6R)-10-formyltetrahydrofolate = N-formyl-L-methionyl-tRNA(fMet) + (6S)-5,6,7,8-tetrahydrofolate + H(+). Its function is as follows. Attaches a formyl group to the free amino group of methionyl-tRNA(fMet). The formyl group appears to play a dual role in the initiator identity of N-formylmethionyl-tRNA by promoting its recognition by IF2 and preventing the misappropriation of this tRNA by the elongation apparatus. The sequence is that of Methionyl-tRNA formyltransferase from Neisseria gonorrhoeae (strain ATCC 700825 / FA 1090).